The sequence spans 48 residues: Large ribosomal subunit protein bL33A (48 aa).

The protein belongs to the bacterial ribosomal protein bL33 family.

The sequence is that of Large ribosomal subunit protein bL33A from Streptococcus agalactiae serotype V (strain ATCC BAA-611 / 2603 V/R).